The following is a 104-amino-acid chain: Large ribosomal subunit protein uL15z (104 aa).

It belongs to the universal ribosomal protein uL15 family.

This Arabidopsis thaliana (Mouse-ear cress) protein is Large ribosomal subunit protein uL15z (RPL27AA).